The primary structure comprises 193 residues: Cbp/p300-interacting transactivator 1 (193 aa).

3 disordered regions span residues 1–26 (MPTT…NQEM), 50–88 (VASN…LHPA), and 106–147 (GMAA…SPAI). Residues 54–73 (GTKASGAPTSSSGSPIGSPT) show a composition bias toward low complexity. Residues 158–167 (LMSLVVELGL) carry the Nuclear export signal motif.

This sequence belongs to the CITED family. As to quaternary structure, interacts (via C-terminus) with CREBBP. Interacts with EGR2. Homodimer. Binds to RBM14. Interacts (via N-terminus) with HSPA8; the interaction suppresses the association of CITED1 with p300/CBP and SMAD-mediated transcription transactivation. Interacts (via C-terminus) with TOX3 (via HGM box); the interaction increases estrogen-response element (ERE)-dependent transcription and protection against cell death. Interacts with ESR1; the interaction occurs in a estrogen-dependent manner. Interacts (unphosphorylated form preferentially and via C-terminus) with EP300. Post-translationally, phosphorylated. Phosphorylation changes in a cell cycle-dependent manner and reduces its transcriptional coactivator activity. As to expression, expressed only in melanocytes and testis.

It is found in the nucleus. Its subcellular location is the cytoplasm. Transcriptional coactivator of the p300/CBP-mediated transcription complex. Enhances SMAD-mediated transcription by strengthening the functional link between the DNA-binding SMAD transcription factors and the p300/CBP transcription coactivator complex. Stimulates estrogen-dependent transactivation activity mediated by estrogen receptors signaling; stabilizes the interaction of estrogen receptor ESR1 and histone acetyltransferase EP300. Positively regulates TGF-beta signaling through its association with the SMAD/p300/CBP-mediated transcriptional coactivator complex. Induces transcription from estrogen-responsive promoters and protection against cell death. Potentiates EGR2-mediated transcriptional activation activity from the ERBB2 promoter. Acts as an inhibitor of osteoblastic mineralization through a cAMP-dependent parathyroid hormone receptor signaling. May play a role in pigmentation of melanocytes. Associates with chromatin to the estrogen-responsive TGF-alpha promoter region in a estrogen-dependent manner. The chain is Cbp/p300-interacting transactivator 1 (CITED1) from Homo sapiens (Human).